The sequence spans 116 residues: NADH-ubiquinone oxidoreductase chain 3 (116 aa).

3 helical membrane passes run 3 to 23 (LVIS…VVSF), 56 to 76 (FFLV…LLAL), and 85 to 105 (ATGT…GLIY).

This sequence belongs to the complex I subunit 3 family.

Its subcellular location is the mitochondrion membrane. It carries out the reaction a ubiquinone + NADH + 5 H(+)(in) = a ubiquinol + NAD(+) + 4 H(+)(out). In terms of biological role, core subunit of the mitochondrial membrane respiratory chain NADH dehydrogenase (Complex I) that is believed to belong to the minimal assembly required for catalysis. Complex I functions in the transfer of electrons from NADH to the respiratory chain. The immediate electron acceptor for the enzyme is believed to be ubiquinone. This Formosania lacustris (Oriental stream loach) protein is NADH-ubiquinone oxidoreductase chain 3 (MT-ND3).